A 324-amino-acid polypeptide reads, in one-letter code: NADH-ubiquinone oxidoreductase chain 1 (324 aa).

8 helical membrane passes run 5 to 25, 75 to 95, 106 to 126, 146 to 166, 177 to 197, 228 to 248, 259 to 279, and 299 to 319; these read ILLY…ATAF, FLFL…WMPL, LGLL…LGSG, ISYE…TGGF, TVWL…STLA, LFFL…VILF, QIST…FLWI, and FLPL…ATAS.

Belongs to the complex I subunit 1 family.

The protein localises to the mitochondrion inner membrane. It carries out the reaction a ubiquinone + NADH + 5 H(+)(in) = a ubiquinol + NAD(+) + 4 H(+)(out). Core subunit of the mitochondrial membrane respiratory chain NADH dehydrogenase (Complex I) that is believed to belong to the minimal assembly required for catalysis. Complex I functions in the transfer of electrons from NADH to the respiratory chain. The immediate electron acceptor for the enzyme is believed to be ubiquinone. This Squalus acanthias (Spiny dogfish) protein is NADH-ubiquinone oxidoreductase chain 1 (MT-ND1).